A 711-amino-acid polypeptide reads, in one-letter code: Exotoxin translocation ATP-binding protein PaxB (711 aa).

The Peptidase C39 domain occupies 1 to 129; the sequence is MEPLMSFKQK…QVFQGNVILL (129 aa). Transmembrane regions (helical) follow at residues 157 to 177, 195 to 215, 273 to 293, 299 to 319, and 392 to 412; these read IFVE…ITPL, LNVI…LSGL, ALTS…MWYY, IVIL…SPIL, and VMII…LSIG. The ABC transmembrane type-1 domain occupies 158–440; sequence FVEVMIVSIF…LAQLWQDFQQ (283 aa). Residues 472–707 form the ABC transporter domain; the sequence is VTFKNIRFRY…KDGLYYYLNQ (236 aa). 506–513 lines the ATP pocket; the sequence is GRSGSGKS.

The protein belongs to the ABC transporter superfamily. Protein-1 exporter (TC 3.A.1.109) family. In terms of assembly, homodimer.

It is found in the cell inner membrane. It carries out the reaction ATP + H2O + proteinSide 1 = ADP + phosphate + proteinSide 2.. Its function is as follows. Part of the ABC transporter complex PaxBD involved in PaxA export. Transmembrane domains (TMD) form a pore in the inner membrane and the ATP-binding domain (NBD) is responsible for energy generation. This chain is Exotoxin translocation ATP-binding protein PaxB (paxB), found in Pasteurella aerogenes.